The chain runs to 262 residues: Acyl-[acyl-carrier-protein]--UDP-N-acetylglucosamine O-acyltransferase (262 aa).

The protein belongs to the transferase hexapeptide repeat family. LpxA subfamily. As to quaternary structure, homotrimer.

The protein resides in the cytoplasm. It catalyses the reaction a (3R)-hydroxyacyl-[ACP] + UDP-N-acetyl-alpha-D-glucosamine = a UDP-3-O-[(3R)-3-hydroxyacyl]-N-acetyl-alpha-D-glucosamine + holo-[ACP]. The protein operates within glycolipid biosynthesis; lipid IV(A) biosynthesis; lipid IV(A) from (3R)-3-hydroxytetradecanoyl-[acyl-carrier-protein] and UDP-N-acetyl-alpha-D-glucosamine: step 1/6. In terms of biological role, involved in the biosynthesis of lipid A, a phosphorylated glycolipid that anchors the lipopolysaccharide to the outer membrane of the cell. The chain is Acyl-[acyl-carrier-protein]--UDP-N-acetylglucosamine O-acyltransferase from Salmonella typhi.